The sequence spans 335 residues: NAC domain-containing protein 87 (335 aa).

In terms of domain architecture, NAC spans 21–172 (LPPGFRFHPT…EWVVCRVFHK (152 aa)). A DNA-binding region spans residues 119 to 178 (VGMKKTLVFYRGRAPKGEKTNWVMHEYRLEGKYSYYNLPKSARDEWVVCRVFHKNNPSTT).

The protein resides in the nucleus. In terms of biological role, binds to the promoter regions of genes involved in chlorophyll catabolic processes, such as NYC1, SGR1, SGR2 and PAO. The chain is NAC domain-containing protein 87 from Arabidopsis thaliana (Mouse-ear cress).